We begin with the raw amino-acid sequence, 311 residues long: Olfactory receptor 1L4 (311 aa).

The Extracellular portion of the chain corresponds to 1–26 (METKNYSSSTSGFILLGLSSNPKLQK). Asn-5 carries N-linked (GlcNAc...) asparagine glycosylation. Residues 27 to 50 (PLFAIFLIMYLLTAVGNVLIILAI) form a helical membrane-spanning segment. Topologically, residues 51–58 (YSDPRLHT) are cytoplasmic. A helical membrane pass occupies residues 59–80 (PMYFFLSNLSFMDICFTTVIVP). Residues 81–101 (KMLVNFLSETKIISYVGCLIQ) are Extracellular-facing. An intrachain disulfide couples Cys-98 to Cys-190. A helical membrane pass occupies residues 102-121 (MYFFMAFGNTDSYLLASMAI). The Cytoplasmic segment spans residues 122 to 140 (DRLVAICNPLHYDVVMKPW). The helical transmembrane segment at 141 to 159 (HCLLMLLGSCSISHLHSLF) threads the bilayer. At 160-197 (RVLLMSRLSFCASHIIKHFFCDTQPVLKLSCSDTSSSQ) the chain is on the extracellular side. The helical transmembrane segment at 198–220 (MVVMTETLAVIVTPFLCTIFSYL) threads the bilayer. Residues 221 to 237 (QIIVTVLRIPSAAGKWK) lie on the Cytoplasmic side of the membrane. Residues 238–260 (AFSTCGSHLTVVVLFYGSVIYVY) traverse the membrane as a helical segment. Over 261–273 (FRPLSMYSVMKGR) the chain is Extracellular. The helical transmembrane segment at 274–293 (VATVMYTVVTPMLNPFIYSL) threads the bilayer. The Cytoplasmic segment spans residues 294–311 (RNKDMKRGLKKLRHRIYS).

This sequence belongs to the G-protein coupled receptor 1 family.

Its subcellular location is the cell membrane. Its function is as follows. Odorant receptor. This chain is Olfactory receptor 1L4 (OR1L4), found in Homo sapiens (Human).